We begin with the raw amino-acid sequence, 100 residues long: NADH-quinone oxidoreductase subunit K (100 aa).

The next 3 membrane-spanning stretches (helical) occupy residues 4-24, 28-48, and 60-80; these read LQHGLILAAILFVLGLTGLLV, LLFMLISLEVMINAAALAFIV, and VMYILAISLAAAEASIGLALL.

The protein belongs to the complex I subunit 4L family. As to quaternary structure, NDH-1 is composed of 13 different subunits. Subunits NuoA, H, J, K, L, M, N constitute the membrane sector of the complex.

The protein localises to the cell inner membrane. The enzyme catalyses a quinone + NADH + 5 H(+)(in) = a quinol + NAD(+) + 4 H(+)(out). Its function is as follows. NDH-1 shuttles electrons from NADH, via FMN and iron-sulfur (Fe-S) centers, to quinones in the respiratory chain. The immediate electron acceptor for the enzyme in this species is believed to be ubiquinone. Couples the redox reaction to proton translocation (for every two electrons transferred, four hydrogen ions are translocated across the cytoplasmic membrane), and thus conserves the redox energy in a proton gradient. The chain is NADH-quinone oxidoreductase subunit K from Serratia proteamaculans (strain 568).